We begin with the raw amino-acid sequence, 220 residues long: NADH-quinone oxidoreductase subunit I (220 aa).

4Fe-4S ferredoxin-type domains are found at residues 71–102 (LQRLLDSGSERCIGCGLCEKICTSNCIRIITH) and 112–141 (DSYTINLGRCIYCGLCAEVCPELAIVMGNR). Residues Cys-82, Cys-85, Cys-88, Cys-92, Cys-121, Cys-124, Cys-127, and Cys-131 each coordinate [4Fe-4S] cluster. Residues 189–220 (ATPLDYVQEPSKEESKKETPTSPEANKGDENV) are disordered. A compositionally biased stretch (basic and acidic residues) spans 198 to 207 (PSKEESKKET).

The protein belongs to the complex I 23 kDa subunit family. As to quaternary structure, NDH-1 is composed of 14 different subunits. Subunits NuoA, H, J, K, L, M, N constitute the membrane sector of the complex. It depends on [4Fe-4S] cluster as a cofactor.

It localises to the cell inner membrane. It carries out the reaction a quinone + NADH + 5 H(+)(in) = a quinol + NAD(+) + 4 H(+)(out). Its function is as follows. NDH-1 shuttles electrons from NADH, via FMN and iron-sulfur (Fe-S) centers, to quinones in the respiratory chain. The immediate electron acceptor for the enzyme in this species is believed to be ubiquinone. Couples the redox reaction to proton translocation (for every two electrons transferred, four hydrogen ions are translocated across the cytoplasmic membrane), and thus conserves the redox energy in a proton gradient. The chain is NADH-quinone oxidoreductase subunit I from Helicobacter acinonychis (strain Sheeba).